A 345-amino-acid polypeptide reads, in one-letter code: Anthranilate phosphoribosyltransferase (345 aa).

Residues Gly-79, Gly-82 to Asp-83, Thr-87, Asn-89 to Thr-92, Lys-106 to Gly-114, and Ser-118 contribute to the 5-phospho-alpha-D-ribose 1-diphosphate site. An anthranilate-binding site is contributed by Gly-79. Residue Ser-91 coordinates Mg(2+). An anthranilate-binding site is contributed by Asn-109. Arg-164 contributes to the anthranilate binding site. Mg(2+)-binding residues include Asp-223 and Glu-224.

It belongs to the anthranilate phosphoribosyltransferase family. Homodimer. Mg(2+) serves as cofactor.

It catalyses the reaction N-(5-phospho-beta-D-ribosyl)anthranilate + diphosphate = 5-phospho-alpha-D-ribose 1-diphosphate + anthranilate. The protein operates within amino-acid biosynthesis; L-tryptophan biosynthesis; L-tryptophan from chorismate: step 2/5. In terms of biological role, catalyzes the transfer of the phosphoribosyl group of 5-phosphorylribose-1-pyrophosphate (PRPP) to anthranilate to yield N-(5'-phosphoribosyl)-anthranilate (PRA). This is Anthranilate phosphoribosyltransferase from Saccharolobus islandicus (strain M.16.27) (Sulfolobus islandicus).